A 74-amino-acid polypeptide reads, in one-letter code: Sodium channel neurotoxin MeuNaTxalpha-11 (74 aa).

The first 7 residues, 1-7 (LMTGVES), serve as a signal peptide directing secretion. Positions 9 to 73 (RDAYIAKPHN…VPIRIPGKCH (65 aa)) constitute an LCN-type CS-alpha/beta domain. 4 cysteine pairs are disulfide-bonded: cysteine 19–cysteine 72, cysteine 23–cysteine 45, cysteine 31–cysteine 55, and cysteine 35–cysteine 57. A propeptide (removed by a carboxypeptidase) is located at residue arginine 74.

It belongs to the long (4 C-C) scorpion toxin superfamily. Sodium channel inhibitor family. Alpha subfamily. As to expression, expressed by the venom gland.

The protein localises to the secreted. Alpha toxins bind voltage-independently at site-3 of sodium channels (Nav) and inhibit the inactivation of the activated channels, thereby blocking neuronal transmission. In Mesobuthus eupeus (Lesser Asian scorpion), this protein is Sodium channel neurotoxin MeuNaTxalpha-11.